We begin with the raw amino-acid sequence, 829 residues long: MNSGVAMKYGNDSSAELSELHSAALASLKGDIVELNKRLQQTERERDLLEKKLAKAQCEQSHLMREHEDVQERTTLRYEERITELHSVIAELNKKIDRLQGTTIREEDEYSELRSELSQSQHEVNEDSRSMDQDQTSVSIPENQSTMVTADMDNCSDLNSELQRVLTGLENVVCGRKKSSCSLSVAEVDKHIEQLTTASEHCDLAIKTVEEIEGVLGRDLYPNLAEERSRWEKELAGLREENESLTAMLCSKEEELNRTKATMNAIREERDRLRRRVRELQTRLQSVQATGPSSPGRLTSTNRPINPSTGELSTSSSSNDIPIAKIAERVKLSKTRSESSSSDRPVLGSEISSIGVSSSVAEHLAHSLQDCSNIQEIFQTLYSHGSAISESKIREFEVETERLNSRIEHLKSQNDLLTITLEECKSNAERMSMLVGKYESNATALRLALQYSEQCIEAYELLLALAESEQSLILGQFRAAGVGSSPGDQSGDENITQMLKRAHDCRKTAENAAKALLMKLDGSCGGAFAVAGCSVQPWESLSSNSHTSTTSSTASSCDTEFTKEDEQRLKDYIQQLKNDRAAVKLTMLELESIHIDPLSYDVKPRGDSQRLDLENAVLMQELMAMKEEMAELKAQLYLLEKEKKALELKLSTREAQEQAYLVHIEHLKSEVEEQKEQRMRSLSSTSSGSKDKPGKECADAASPALSLAELRTTCSENELAAEFTNAIRREKKLKARVQELVSALERLTKSSEIRHQQSAEFVNDLKRANSNLVAAYEKAKKKHQNKLKKLESQMMAMVERHETQVRMLKQRIALLEEENSRPHTNETSL.

Disordered stretches follow at residues 114–139, 282–320, and 672–700; these read RSELSQSQHEVNEDSRSMDQDQTSVS, TRLQSVQATGPSSPGRLTSTNRPINPSTGELSTSSSSND, and EEQKEQRMRSLSSTSSGSKDKPGKECADA. The segment covering 123–132 has biased composition (basic and acidic residues); the sequence is EVNEDSRSMD. Residues 285–312 show a composition bias toward polar residues; the sequence is QSVQATGPSSPGRLTSTNRPINPSTGEL. Basic and acidic residues predominate over residues 689–698; sequence SKDKPGKECA. Positions 766-782 match the Nuclear localization signal motif; the sequence is KRANSNLVAAYEKAKKK. The PDZ-binding motif lies at 826 to 829; sequence ETSL. Serine 828 is modified (phosphoserine).

Belongs to the MCC family. In terms of assembly, interacts with SCRIB (via phosphorylated PDZ-binding motif), EZR, SNX27, NHERF1 and NHERF2. Interacts with CTNNB1; the interaction is enhanced upon Wnt stimulation. Interacts with MYH10. Interacts with CCAR2. Expressed in a variety of tissues.

It is found in the cell membrane. The protein localises to the cell projection. The protein resides in the lamellipodium. It localises to the nucleus. Its subcellular location is the cytoplasm. Its function is as follows. Candidate for the putative colorectal tumor suppressor gene located at 5q21. Suppresses cell proliferation and the Wnt/b-catenin pathway in colorectal cancer cells. Inhibits DNA binding of b-catenin/TCF/LEF transcription factors. Involved in cell migration independently of RAC1, CDC42 and p21-activated kinase (PAK) activation. Represses the beta-catenin pathway (canonical Wnt signaling pathway) in a CCAR2-dependent manner by sequestering CCAR2 to the cytoplasm, thereby impairing its ability to inhibit SIRT1 which is involved in the deacetylation and negative regulation of beta-catenin (CTNB1) transcriptional activity. In Homo sapiens (Human), this protein is Colorectal mutant cancer protein (MCC).